Consider the following 313-residue polypeptide: Acetaldehyde dehydrogenase 3 (313 aa).

Position 11-14 (11-14 (SGNI)) interacts with NAD(+). The Acyl-thioester intermediate role is filled by Cys-129. NAD(+) contacts are provided by residues 160-168 (SAGPGTRAN) and Asn-288.

This sequence belongs to the acetaldehyde dehydrogenase family.

It carries out the reaction acetaldehyde + NAD(+) + CoA = acetyl-CoA + NADH + H(+). The sequence is that of Acetaldehyde dehydrogenase 3 from Rhizorhabdus wittichii (strain DSM 6014 / CCUG 31198 / JCM 15750 / NBRC 105917 / EY 4224 / RW1) (Sphingomonas wittichii).